Reading from the N-terminus, the 801-residue chain is Na(+)/H(+) antiporter subunit A1 (801 aa).

Helical transmembrane passes span Leu-4 to Phe-25, Leu-30 to Ile-49, Leu-79 to Tyr-101, Leu-108 to Leu-127, Val-131 to Arg-153, Leu-166 to Gln-188, Phe-208 to Ile-230, Ser-243 to Ile-265, Gln-270 to Leu-289, Ala-302 to His-324, Ala-339 to Val-361, Leu-373 to Ala-395, Tyr-429 to Met-451, Ile-472 to Ile-494, Ala-526 to Val-548, Asn-589 to Phe-611, Ile-621 to Phe-641, Leu-646 to Ala-668, Ala-672 to Pro-694, Leu-707 to Gly-729, and Leu-767 to Ile-784.

Belongs to the CPA3 antiporters (TC 2.A.63) subunit A family. In terms of assembly, may form a heterooligomeric complex that consists of seven subunits: mnhA1, mnhB1, mnhC1, mnhD1, mnhE1, mnhF1 and mnhG1.

The protein localises to the cell membrane. With respect to regulation, na(+) extrusion is completely inhibited by the H(+) conductor carbonyl cyanide m-chlorophenylhydrazone (CCCP). Mnh complex is a Na(+)/H(+) antiporter involved in Na(+) excretion. This Staphylococcus aureus (strain MRSA252) protein is Na(+)/H(+) antiporter subunit A1 (mnhA1).